The primary structure comprises 92 residues: Small nuclear ribonucleoprotein E (92 aa).

The region spanning 18 to 92 (INLIFRYLQN…NITLLQSVSN (75 aa)) is the Sm domain.

It belongs to the snRNP Sm proteins family. Core component of the spliceosomal U1, U2, U4 and U5 small nuclear ribonucleoproteins (snRNPs), the building blocks of the spliceosome. Most spliceosomal snRNPs contain a common set of Sm proteins, snrpb, snrpd1, snrpd2, snrpd3, snrpe, snrpf and snrpg that assemble in a heptameric protein ring on the Sm site of the small nuclear RNA to form the core snRNP. Component of the U1 snRNP. The U1 snRNP is composed of the U1 snRNA and the 7 core Sm proteins snrpb, snrpd1, snrpd2, snrpd3, snrpe, snrpf and snrpg, and at least three U1 snRNP-specific proteins snrnp70/u1-70k, snrpa/u1-a and snrpc/u1-c. Component of the U4/U6-U5 tri-snRNP complex composed of the U4, U6 and U5 snRNAs and at least prpf3, prpf4, prpf6, prpf8, prpf31, snrnp200, txnl4a, snrnp40, snrpb, snrpd1, snrpd2, snrpd3, snrpe, snrpf, snrpg, ddx23, cd2bp2, ppih, snu13, eftud2, sart1 and usp39, plus lsm2, lsm3, lsm4, lsm5, lsm6, lsm7 and lsm8. Component of the U7 snRNP complex, or U7 Sm protein core complex, that is composed of the U7 snRNA and at least lsm10, lsm11, snrpb, snrpd3, snrpe, snrpf and snrpg; the complex does not contain snrpd1 and snrpd2. Component of the minor spliceosome, which splices U12-type introns. Part of the SMN-Sm complex that contains smn1, gemin2/sip1, ddx20/gemin3, gemin4, gemin5, gemin6, gemin7, gemin8, strap/unrip and the Sm proteins snrpb, snrpd1, snrpd2, snrpd3, snrpe, snrpf and snrpg; catalyzes core snRNPs assembly. Forms a 6S pICln-Sm complex composed of clns1a/pICln, snrpd1, snrpd2, snrpe, snrpf and snrpg; ring-like structure where clns1a/pICln mimics additional Sm proteins and which is unable to assemble into the core snRNP.

It localises to the cytoplasm. The protein resides in the cytosol. It is found in the nucleus. Functionally, plays a role in pre-mRNA splicing as a core component of the spliceosomal U1, U2, U4 and U5 small nuclear ribonucleoproteins (snRNPs), the building blocks of the spliceosome. Component of both the pre-catalytic spliceosome B complex and activated spliceosome C complexes. As a component of the minor spliceosome, involved in the splicing of U12-type introns in pre-mRNAs. As part of the U7 snRNP it is involved in histone 3'-end processing. In Danio rerio (Zebrafish), this protein is Small nuclear ribonucleoprotein E (snrpe).